Here is a 443-residue protein sequence, read N- to C-terminus: Large ribosomal subunit protein mL50 (443 aa).

The interval glutamine 121–leucine 145 is disordered. The segment covering aspartate 126–asparagine 135 has biased composition (basic and acidic residues).

Belongs to the mitochondrion-specific ribosomal protein mL50 family. Component of the mitochondrial large ribosomal subunit (mt-LSU). Mature N.crassa 74S mitochondrial ribosomes consist of a small (37S) and a large (54S) subunit. The 37S small subunit contains a 16S ribosomal RNA (16S mt-rRNA) and 32 different proteins. The 54S large subunit contains a 23S rRNA (23S mt-rRNA) and 42 different proteins.

Its subcellular location is the mitochondrion. Functionally, component of the mitochondrial ribosome (mitoribosome), a dedicated translation machinery responsible for the synthesis of mitochondrial genome-encoded proteins, including at least some of the essential transmembrane subunits of the mitochondrial respiratory chain. The mitoribosomes are attached to the mitochondrial inner membrane and translation products are cotranslationally integrated into the membrane. This Neurospora crassa (strain ATCC 24698 / 74-OR23-1A / CBS 708.71 / DSM 1257 / FGSC 987) protein is Large ribosomal subunit protein mL50 (mrpl13).